A 298-amino-acid polypeptide reads, in one-letter code: UDP-N-acetylenolpyruvoylglucosamine reductase (298 aa).

One can recognise an FAD-binding PCMH-type domain in the interval 26 to 191; sequence KTGGEAEYLA…LSATFSLKPG (166 aa). Arginine 170 is a catalytic residue. Serine 220 acts as the Proton donor in catalysis. The active site involves glutamate 290.

This sequence belongs to the MurB family. FAD serves as cofactor.

The protein resides in the cytoplasm. The enzyme catalyses UDP-N-acetyl-alpha-D-muramate + NADP(+) = UDP-N-acetyl-3-O-(1-carboxyvinyl)-alpha-D-glucosamine + NADPH + H(+). It functions in the pathway cell wall biogenesis; peptidoglycan biosynthesis. Its function is as follows. Cell wall formation. In Lactobacillus acidophilus (strain ATCC 700396 / NCK56 / N2 / NCFM), this protein is UDP-N-acetylenolpyruvoylglucosamine reductase.